The sequence spans 249 residues: Segregation and condensation protein A (249 aa).

The protein belongs to the ScpA family. In terms of assembly, component of a cohesin-like complex composed of ScpA, ScpB and the Smc homodimer, in which ScpA and ScpB bind to the head domain of Smc. The presence of the three proteins is required for the association of the complex with DNA.

It localises to the cytoplasm. In terms of biological role, participates in chromosomal partition during cell division. May act via the formation of a condensin-like complex containing Smc and ScpB that pull DNA away from mid-cell into both cell halves. This Mycoplasmopsis pulmonis (strain UAB CTIP) (Mycoplasma pulmonis) protein is Segregation and condensation protein A.